The following is a 465-amino-acid chain: Phosphomethylpyrimidine synthase (465 aa).

Substrate contacts are provided by residues asparagine 80, methionine 109, tyrosine 139, histidine 175, 195-197 (SRG), 236-239 (DSLR), and glutamate 275. Histidine 279 provides a ligand contact to Zn(2+). Position 302 (tyrosine 302) interacts with substrate. Residue histidine 343 coordinates Zn(2+). Residues cysteine 423, cysteine 426, and cysteine 431 each contribute to the [4Fe-4S] cluster site.

The protein belongs to the ThiC family. The cofactor is [4Fe-4S] cluster.

The catalysed reaction is 5-amino-1-(5-phospho-beta-D-ribosyl)imidazole + S-adenosyl-L-methionine = 4-amino-2-methyl-5-(phosphooxymethyl)pyrimidine + CO + 5'-deoxyadenosine + formate + L-methionine + 3 H(+). The protein operates within cofactor biosynthesis; thiamine diphosphate biosynthesis. Its function is as follows. Catalyzes the synthesis of the hydroxymethylpyrimidine phosphate (HMP-P) moiety of thiamine from aminoimidazole ribotide (AIR) in a radical S-adenosyl-L-methionine (SAM)-dependent reaction. This chain is Phosphomethylpyrimidine synthase, found in Synechococcus sp. (strain CC9311).